The primary structure comprises 445 residues: Proline--tRNA ligase (445 aa).

Belongs to the class-II aminoacyl-tRNA synthetase family. ProS type 2 subfamily. In terms of assembly, homodimer.

The protein resides in the cytoplasm. The enzyme catalyses tRNA(Pro) + L-proline + ATP = L-prolyl-tRNA(Pro) + AMP + diphosphate. Its function is as follows. Catalyzes the attachment of proline to tRNA(Pro) in a two-step reaction: proline is first activated by ATP to form Pro-AMP and then transferred to the acceptor end of tRNA(Pro). The sequence is that of Proline--tRNA ligase from Caulobacter sp. (strain K31).